Consider the following 502-residue polypeptide: ATP synthase subunit alpha (502 aa).

169 to 176 (GDRQTGKT) provides a ligand contact to ATP.

It belongs to the ATPase alpha/beta chains family. As to quaternary structure, F-type ATPases have 2 components, CF(1) - the catalytic core - and CF(0) - the membrane proton channel. CF(1) has five subunits: alpha(3), beta(3), gamma(1), delta(1), epsilon(1). CF(0) has three main subunits: a(1), b(2) and c(9-12). The alpha and beta chains form an alternating ring which encloses part of the gamma chain. CF(1) is attached to CF(0) by a central stalk formed by the gamma and epsilon chains, while a peripheral stalk is formed by the delta and b chains.

The protein localises to the cell inner membrane. It catalyses the reaction ATP + H2O + 4 H(+)(in) = ADP + phosphate + 5 H(+)(out). Functionally, produces ATP from ADP in the presence of a proton gradient across the membrane. The alpha chain is a regulatory subunit. This Pelobacter propionicus (strain DSM 2379 / NBRC 103807 / OttBd1) protein is ATP synthase subunit alpha.